The primary structure comprises 344 residues: MSNAITMGIFWHLIGAASAACFYAPFKKVKKWSWETMWSVGGIVSWIILPWAISALLLPNFWAYYSSFSLSTLLPVFLFGAMWGIGNINYGLTMRYLGMSMGIGIAIGITLIVGTLMTPIINGNFDVLLNTEGGRMTLLGVLVALIGVGIVTRAGQLKERKMGIKAEEFNLKKGLVLAVMCGIFSAGMSFAMNAAKPMHEAAAALGVDPLYVALPSYVIIMGGGAIINLGFCFIRLAKVKDLSLKADFSLAKPLIIHNVLLSALGGLMWYLQFFFYAWGHARIPAQYDYISWMLHMSFYVLCGGIVGLVLKEWNNAGRRPVTVLSLGCVVIIVAANIVGIGMAN.

10 consecutive transmembrane segments (helical) span residues alanine 4–alanine 24, tryptophan 38–leucine 58, phenylalanine 68–isoleucine 88, methionine 101–isoleucine 121, threonine 137–leucine 157, leucine 175–alanine 195, leucine 214–isoleucine 234, valine 259–glycine 279, isoleucine 290–leucine 310, and valine 323–alanine 343.

The protein belongs to the L-rhamnose transporter (TC 2.A.7.6) family.

Its subcellular location is the cell inner membrane. It carries out the reaction L-rhamnopyranose(in) + H(+)(in) = L-rhamnopyranose(out) + H(+)(out). Its function is as follows. Uptake of L-rhamnose across the cytoplasmic membrane with the concomitant transport of protons into the cell (symport system). The protein is L-rhamnose-proton symporter of Shigella boydii serotype 18 (strain CDC 3083-94 / BS512).